The chain runs to 234 residues: Large ribosomal subunit protein uL1 (234 aa).

Belongs to the universal ribosomal protein uL1 family. Part of the 50S ribosomal subunit.

Binds directly to 23S rRNA. The L1 stalk is quite mobile in the ribosome, and is involved in E site tRNA release. In terms of biological role, protein L1 is also a translational repressor protein, it controls the translation of the L11 operon by binding to its mRNA. The polypeptide is Large ribosomal subunit protein uL1 (Syntrophobacter fumaroxidans (strain DSM 10017 / MPOB)).